The sequence spans 1180 residues: Nonsense-mediated mRNA decay factor SMG7 (1180 aa).

TPR repeat units lie at residues 151–184 (QHCLVHLGDIARYRNQTSQAESYYRHAAQLVPSN) and 186–218 (QPYNQLAILASSKGDHLTTIFYYCRSIAVKFPF). 5 disordered regions span residues 496–636 (PQEK…TQTT), 692–795 (QTAS…SYMQ), 893–913 (CSDQENMPRGPPYEDNKSSPL), 1019–1127 (SLFE…WAAQ), and 1148–1180 (SSMMQPGPSALEQLLMQQKQKQQRGHGNMNPPH). The segment covering 504–520 (LQESSNGEQTPNESTHG) has biased composition (polar residues). Basic and acidic residues-rich tracts occupy residues 547 to 559 (ENIKPREQSREQN), 584 to 606 (NEQKKEGKRKSEVKKNSHDKTTD), and 615 to 627 (TELRKTPVSEARK). Residues 692–718 (QTASHPQSANPVQTGKPSHIPYSQQRP) are compositionally biased toward polar residues. Residues 728 to 740 (PPQPQQTQPPPPQ) are compositionally biased toward pro residues. Residues 741–778 (TSQQALQQSVQLQLQQQQQQQQQQQQQQQQSPTKQSSQ) show a composition bias toward low complexity. Residues 1026-1038 (WSPSLPASSDHST) show a composition bias toward polar residues. Over residues 1039–1065 (PASQSPHSSNPSSLPSSPPTHSHGSMP) the composition is skewed to low complexity. Basic and acidic residues predominate over residues 1076–1090 (DSRDRRANDRWKAEK). A compositionally biased stretch (polar residues) spans 1103-1125 (SASTSSVPETNSWHQGAPTSTWA).

The protein resides in the cytoplasm. It is found in the nucleus. Functionally, plays a role in nonsense-mediated mRNA decay. Recruits UPF1 to cytoplasmic mRNA decay bodies. Together with SMG5 is thought to provide a link to the mRNA degradation machinery involving exonucleolytic pathways, and to serve as an adapter for UPF1 to protein phosphatase 2A (PP2A), thereby triggering UPF1 dephosphorylation. Required for normal embryonic development. The protein is Nonsense-mediated mRNA decay factor SMG7 of Danio rerio (Zebrafish).